The following is a 960-amino-acid chain: Leucine--tRNA ligase (960 aa).

A 'HIGH' region motif is present at residues 71 to 82 (PYPSGAGLHVGH). Positions 729-733 (KMGKS) match the 'KMSKS' region motif. Position 732 (Lys732) interacts with ATP.

It belongs to the class-I aminoacyl-tRNA synthetase family.

It localises to the cytoplasm. It carries out the reaction tRNA(Leu) + L-leucine + ATP = L-leucyl-tRNA(Leu) + AMP + diphosphate. This is Leucine--tRNA ligase from Corynebacterium diphtheriae (strain ATCC 700971 / NCTC 13129 / Biotype gravis).